A 400-amino-acid chain; its full sequence is Acetate kinase (400 aa).

Residue Asn-10 participates in Mg(2+) binding. Lys-17 lines the ATP pocket. Arg-91 serves as a coordination point for substrate. Catalysis depends on Asp-150, which acts as the Proton donor/acceptor. Residues 210–214 (HLGNG), 285–287 (DCR), and 333–337 (GIGEN) each bind ATP. A Mg(2+)-binding site is contributed by Glu-387.

This sequence belongs to the acetokinase family. Homodimer. The cofactor is Mg(2+). Requires Mn(2+) as cofactor.

The protein localises to the cytoplasm. It catalyses the reaction acetate + ATP = acetyl phosphate + ADP. The protein operates within metabolic intermediate biosynthesis; acetyl-CoA biosynthesis; acetyl-CoA from acetate: step 1/2. Functionally, catalyzes the formation of acetyl phosphate from acetate and ATP. Can also catalyze the reverse reaction. The chain is Acetate kinase from Photorhabdus laumondii subsp. laumondii (strain DSM 15139 / CIP 105565 / TT01) (Photorhabdus luminescens subsp. laumondii).